The following is a 1010-amino-acid chain: Ubiquitin conjugation factor E4 (1010 aa).

The tract at residues 13–70 (AKLQQTNSEANSSKEPKESNIAPEPKKPDLKKRFIGSKATTSNSEQKEISPPVTSGAP) is disordered. A compositionally biased stretch (basic and acidic residues) spans 24-44 (SSKEPKESNIAPEPKKPDLKK). The 75-residue stretch at 930-1004 (DIPDYFLDPL…NTFLKSKRNK (75 aa)) folds into the U-box domain.

This sequence belongs to the ubiquitin conjugation factor E4 family.

Its subcellular location is the cytoplasm. It localises to the nucleus. It functions in the pathway protein modification; protein ubiquitination. E4 ubiquitin chain-elongation enzyme specifically involved in polyubiquitin chain assembly. Binds to cdc48 and elongates mono- and diubiquitinated ERAD substrates presented by the ufd1-npl4-cdc48 (UNC) AAA ATPase complex to a chain length of 4 to 6 ubiquitin moieties. Delivers these polyubiquitinated substrates to downstream ERAD components, which target them to the proteasome. Enhances ubiquitination at 'Lys-48', but not at 'Lys-29' of the Ub moiety. The protein is Ubiquitin conjugation factor E4 (ufd2) of Schizosaccharomyces pombe (strain 972 / ATCC 24843) (Fission yeast).